We begin with the raw amino-acid sequence, 211 residues long: MDSIAQLRKNYTFGQLSETEVPHHPLPLFQLWFDQAVKAECPEPNSMTLATADKAGNPSARIVLLKGADQNGFTFFTNYESQKGQDLAVRPQAALLFHWHELERQVRIKGLVERVSATESDEYFHSRPPASRIGAWASPQSAAIPNREFLEEAEKRFKSEFGEAPPRPEHWGGYRLRPTEMEFWQGRPSRLHDRIHYKLDGSNWKVTRLAP.

Substrate-binding positions include 8–11 and lysine 66; that span reads RKNY. Residues 61–66, 76–77, lysine 83, and glutamine 105 each bind FMN; these read RIVLLK and FT. Substrate contacts are provided by tyrosine 123, arginine 127, and serine 131. FMN contacts are provided by residues 140–141 and tryptophan 184; that span reads QS. Residue 190-192 participates in substrate binding; the sequence is RLH. Arginine 194 contacts FMN.

The protein belongs to the pyridoxamine 5'-phosphate oxidase family. As to quaternary structure, homodimer. FMN serves as cofactor.

The enzyme catalyses pyridoxamine 5'-phosphate + O2 + H2O = pyridoxal 5'-phosphate + H2O2 + NH4(+). It carries out the reaction pyridoxine 5'-phosphate + O2 = pyridoxal 5'-phosphate + H2O2. It functions in the pathway cofactor metabolism; pyridoxal 5'-phosphate salvage; pyridoxal 5'-phosphate from pyridoxamine 5'-phosphate: step 1/1. Its pathway is cofactor metabolism; pyridoxal 5'-phosphate salvage; pyridoxal 5'-phosphate from pyridoxine 5'-phosphate: step 1/1. Catalyzes the oxidation of either pyridoxine 5'-phosphate (PNP) or pyridoxamine 5'-phosphate (PMP) into pyridoxal 5'-phosphate (PLP). In Polynucleobacter asymbioticus (strain DSM 18221 / CIP 109841 / QLW-P1DMWA-1) (Polynucleobacter necessarius subsp. asymbioticus), this protein is Pyridoxine/pyridoxamine 5'-phosphate oxidase.